Reading from the N-terminus, the 347-residue chain is Quinolinate synthase (347 aa).

Residues H47 and S68 each contribute to the iminosuccinate site. C113 serves as a coordination point for [4Fe-4S] cluster. Iminosuccinate-binding positions include 139–141 (YAN) and S156. Residue C200 participates in [4Fe-4S] cluster binding. Iminosuccinate is bound by residues 226–228 (HPE) and T243. C297 is a binding site for [4Fe-4S] cluster.

This sequence belongs to the quinolinate synthase family. Type 1 subfamily. [4Fe-4S] cluster is required as a cofactor.

The protein localises to the cytoplasm. It carries out the reaction iminosuccinate + dihydroxyacetone phosphate = quinolinate + phosphate + 2 H2O + H(+). It participates in cofactor biosynthesis; NAD(+) biosynthesis; quinolinate from iminoaspartate: step 1/1. Catalyzes the condensation of iminoaspartate with dihydroxyacetone phosphate to form quinolinate. This Salmonella gallinarum (strain 287/91 / NCTC 13346) protein is Quinolinate synthase.